A 1042-amino-acid chain; its full sequence is Exosome RNA helicase MTR4 (1042 aa).

A2 bears the N-acetylalanine mark. A disordered region spans residues 16-74 (DSTTAAGTKKDKEKDKGKWKGPPGSADKAGKRFDGKLQSESTNNGKNKRDVDFEGTDEP). The segment covering 23–33 (TKKDKEKDKGK) has biased composition (basic and acidic residues). Residue K24 forms a Glycyl lysine isopeptide (Lys-Gly) (interchain with G-Cter in SUMO2) linkage. S40 carries the phosphoserine modification. Residues 43 to 52 (KAGKRFDGKL) show a composition bias toward basic and acidic residues. An N6-acetyllysine mark is found at K51 and K78. ATP is bound by residues I139, 161–168 (AHTSAGKT), S164, G166, K167, and T168. The region spanning 148–304 (IQCVDNNQSV…WICHLHKQPC (157 aa)) is the Helicase ATP-binding domain. Positions 252–255 (DEIH) match the DEIH box motif. Residue K358 forms a Glycyl lysine isopeptide (Lys-Gly) (interchain with G-Cter in SUMO2) linkage. Residues 405 to 577 (QMTKLDFNTD…NMVLNLLRVE (173 aa)) enclose the Helicase C-terminal domain. Glycyl lysine isopeptide (Lys-Gly) (interchain with G-Cter in SUMO2) cross-links involve residues K684 and K723.

Belongs to the helicase family. SKI2 subfamily. As to quaternary structure, component of a TRAMP-like complex, an ATP-dependent exosome regulatory complex consisting of a helicase (MTREX), an oligadenylate polymerase (TENT4B or TENT4A), and a substrate specific RNA-binding factor (ZCCHC7 or ZCCHC8). Several TRAMP-like complexes exist with specific compositions and are associated with nuclear, or nucleolar RNA exosomes. Identified in the spliceosome C complex. Component of the poly(A) tail exosome targeting (PAXT) complex made of PABPN1, ZFC3H1 and MTREX that directs a subset of long and polyadenylated poly(A) RNAs for exosomal degradation. Component of the nuclear exosome targeting (NEXT) complex composed of MTREX, ZCCHC8, and RBM7 that directs a subset of non-coding short-lived RNAs for exosomal degradation. Interacts with ZCCHC8; this interaction bridges the interaction between RBM7 and MTREX. Binds to ZFC3H1 and RBM7 in a RNase-insensitive manner. Interacts with EXOSC10; the interaction mediates the association of MTREX with nuclear RNA exosomes. Interacts with isoform 1 of NVL in an ATP-dependent manner; the interaction is required to associate NVL with nuclear RNA exosome. Interacts with WDR74; the interaction dissociation in a late stage of rRNA synthesis is required for appropriate maturation of pre-60S particles and depends on the ATPase activity of NVL. Interacts with MPHOSPH6. Interacts with the RNA cap-binding complex proteins NCBP1 and SRRT. Interacts with NRDE2; the interaction is direct and negatively regulates MTREX function in exosomal degradation by changing its conformation precluding interaction with ZFC3H1, the RNA cap-binding complex proteins NCBP1 and SRRT, and association with the exosome. Associates with the RNA exosome complex.

The protein resides in the nucleus. Its subcellular location is the nucleoplasm. The protein localises to the nucleolus. It localises to the nucleus speckle. The enzyme catalyses ATP + H2O = ADP + phosphate + H(+). With respect to regulation, activated when MTREX is incorporated into NEXT complex an the nuclear RNA exosome complex. In terms of biological role, catalyzes the ATP-dependent unwinding of RNA duplexes with a single-stranded 3' RNA extension. Central subunit of many protein complexes, namely TRAMP-like, nuclear exosome targeting (NEXT) and poly(A) tail exosome targeting (PAXT). NEXT functions as an RNA exosome cofactor that directs a subset of non-coding short-lived RNAs for exosomal degradation. NEXT is involved in surveillance and turnover of aberrant transcripts and non-coding RNAs. PAXT directs a subset of long and polyadenylated poly(A) RNAs for exosomal degradation. The RNA exosome is fundamental for the degradation of RNA in eukaryotic nuclei. Substrate targeting is facilitated by its cofactor ZCCHC8, which links to RNA-binding protein adapters. Associated with the RNA exosome complex and involved in the 3'-processing of the 7S pre-RNA to the mature 5.8S rRNA. May be involved in pre-mRNA splicing. In the context of NEXT complex can also in vitro unwind DNA:RNA heteroduplexes with a 3' poly (A) RNA tracking strand. Can promote unwinding and degradation of structured RNA substrates when associated with the nuclear exosome and its cofactors. Can displace a DNA strand while translocating on RNA to ultimately degrade the RNA within a DNA/RNA heteroduplex. Plays a role in DNA damage response. This Homo sapiens (Human) protein is Exosome RNA helicase MTR4.